Here is a 928-residue protein sequence, read N- to C-terminus: BCAS3 microtubule associated cell migration factor (928 aa).

Position 1 is an N-acetylmethionine (M1). The WD repeat unit spans residues 69–114; it reads DLNDTSRNLEFHEIHSTGNEPPLLIMIGYSDGMQVWSIPISGEAQE. K215 is covalently cross-linked (Glycyl lysine isopeptide (Lys-Gly) (interchain with G-Cter in SUMO1); alternate). K215 is covalently cross-linked (Glycyl lysine isopeptide (Lys-Gly) (interchain with G-Cter in SUMO2); alternate). Required for recruitment to preautophagosomal structure in response to mitophagy regions lie at residues 254 to 312 and 437 to 560; these read RGGA…SRRS and YGGQ…IKAP. S461, S480, and S488 each carry phosphoserine. Disordered stretches follow at residues 472–515 and 755–777; these read TSKQ…PGNP and TTVI…PQPL. Low complexity-rich tracts occupy residues 480-494, 505-514, and 755-771; these read SPVP…GSPL, NNFTNNNPGN, and TTVI…HGPS. S838, S886, and S898 each carry phosphoserine. Positions 868 to 928 are disordered; that stretch reads ESPSRDVVGS…PLSLFPTGFP (61 aa). Positions 887-901 are enriched in low complexity; it reads IETLSNSSGSTSGSI.

Belongs to the BCAS3 family. In terms of assembly, interacts with histone H3, ESR1, KAT2B and PELP1; the interactions occur in a estrogen-dependent manner. Interacts with beta-tubulin and VIM. Interacts (via C-terminal) with PHAF1; the interaction is requrired for the association with the phagophore. Expressed in stomach, liver, lung, kidney, prostate, testis, thyroid gland, adrenal gland, brain, heart, skeletal muscle, colon, spleen, small intestine, placenta, blood leukocyte and mammary epithelial cells. Expressed in undifferentiated ES cells. Expressed in blood islands and nascent blood vessels derived from differentiated ES cells into embryoid bodies (BD). Expressed in endothelial cells. Not detected in brain. Expressed in brain tumors (at protein level). Expressed in brain. Highly expressed in breast cancers and in glioma cell lines.

It localises to the nucleus. The protein resides in the cytoplasm. The protein localises to the cytoskeleton. Its subcellular location is the preautophagosomal structure. In terms of biological role, plays a role in angiogenesis. Participates in the regulation of cell polarity and directional endothelial cell migration by mediating both the activation and recruitment of CDC42 and the reorganization of the actin cytoskeleton at the cell leading edge. Promotes filipodia formation. Functions synergistically with PELP1 as a transcriptional coactivator of estrogen receptor-responsive genes. Stimulates histone acetyltransferase activity. Binds to chromatin. Plays a regulatory role in autophagic activity. In complex with PHAF1, associates with the preautophagosomal structure during both non-selective and selective autophagy. Probably binds phosphatidylinositol 3-phosphate (PtdIns3P) which would mediate the recruitment preautophagosomal structures. The polypeptide is BCAS3 microtubule associated cell migration factor (Homo sapiens (Human)).